A 189-amino-acid polypeptide reads, in one-letter code: Dihydrofolate reductase (189 aa).

In terms of domain architecture, DHFR spans 3-184 (SLNSIVAVCQ…IQYKFEVYQK (182 aa)). Residues A9 and 15–21 (GIGKDGN) each bind NADP(+). 30–35 (EYKYFQ) lines the substrate pocket. Position 54–56 (54–56 (KKT)) interacts with NADP(+). 2 residues coordinate substrate: N64 and R70. Residues 76 to 78 (SRE) and 116 to 123 (GGTAVYKA) contribute to the NADP(+) site.

The protein belongs to the dihydrofolate reductase family.

It catalyses the reaction (6S)-5,6,7,8-tetrahydrofolate + NADP(+) = 7,8-dihydrofolate + NADPH + H(+). It functions in the pathway cofactor biosynthesis; tetrahydrofolate biosynthesis; 5,6,7,8-tetrahydrofolate from 7,8-dihydrofolate: step 1/1. Its function is as follows. Key enzyme in folate metabolism. Contributes to the de novo mitochondrial thymidylate biosynthesis pathway. Catalyzes an essential reaction for de novo glycine and purine synthesis, and for DNA precursor synthesis. May bind to mRNA. This Gallus gallus (Chicken) protein is Dihydrofolate reductase (DHFR).